We begin with the raw amino-acid sequence, 1228 residues long: Structural maintenance of chromosomes protein 1 (1228 aa).

An ATP-binding site is contributed by 32 to 39 (GPNGAGKS). Residues 197 to 510 (NKKRGINAEL…ESKQDAKKRE (314 aa)) are a coiled coil. An SMC hinge domain is found at 522–635 (VKGRIIDLCT…CDSMTVARDL (114 aa)). Coiled-coil stretches lie at residues 710 to 783 (KLHS…KIFS), 814 to 926 (EFTK…EIDR), and 984 to 1068 (VEVD…KRLQ).

This sequence belongs to the SMC family. SMC1 subfamily. Cohesin complexes are composed of the psm1/smc1 and psm3/smc3 heterodimer attached via their SMC hinge domain, rad21/scc1 which link them, and psc3/scc3, which interacts with rad21.

Its subcellular location is the nucleus. The protein localises to the chromosome. Involved in chromosome cohesion during cell cycle and in DNA repair. Central component of cohesin complex. The cohesin complex is required for the cohesion of sister chromatids after DNA replication. The cohesin complex apparently forms a large proteinaceous ring within which sister chromatids can be trapped. At anaphase, the complex is cleaved and dissociates from chromatin, allowing sister chromatids to segregate. This is Structural maintenance of chromosomes protein 1 (psm1) from Schizosaccharomyces pombe (strain 972 / ATCC 24843) (Fission yeast).